Consider the following 296-residue polypeptide: Light-independent protochlorophyllide reductase iron-sulfur ATP-binding protein (296 aa).

ATP is bound by residues Gly-39–Thr-44 and Lys-68. Ser-43 serves as a coordination point for Mg(2+). [4Fe-4S] cluster-binding residues include Cys-124 and Cys-158. Residue Asn-209 to Arg-210 coordinates ATP.

Belongs to the NifH/BchL/ChlL family. As to quaternary structure, homodimer. Protochlorophyllide reductase is composed of three subunits; ChlL, ChlN and ChlB. [4Fe-4S] cluster serves as cofactor.

It carries out the reaction chlorophyllide a + oxidized 2[4Fe-4S]-[ferredoxin] + 2 ADP + 2 phosphate = protochlorophyllide a + reduced 2[4Fe-4S]-[ferredoxin] + 2 ATP + 2 H2O. It participates in porphyrin-containing compound metabolism; chlorophyll biosynthesis (light-independent). In terms of biological role, component of the dark-operative protochlorophyllide reductase (DPOR) that uses Mg-ATP and reduced ferredoxin to reduce ring D of protochlorophyllide (Pchlide) to form chlorophyllide a (Chlide). This reaction is light-independent. The L component serves as a unique electron donor to the NB-component of the complex, and binds Mg-ATP. The protein is Light-independent protochlorophyllide reductase iron-sulfur ATP-binding protein of Prochlorococcus marinus (strain SARG / CCMP1375 / SS120).